The following is a 90-amino-acid chain: Delta-aiptatoxin-Adi1a (90 aa).

An N-terminal signal peptide occupies residues 1 to 21 (MKTAMLIAVLGFCAALCFVES). Positions 22 to 44 (SHEEEREAAVYLTDLVSKAESAI) are excised as a propeptide. Disulfide bonds link Cys-50–Cys-86, Cys-52–Cys-77, and Cys-70–Cys-87.

The protein belongs to the sea anemone sodium channel inhibitory toxin family.

Its subcellular location is the secreted. It is found in the nematocyst. Functionally, cardioactive peptide that acts on voltage-gated sodium channels (hNav1.5/SCN5A) and voltage-gated potassium channels (Kv). The activity on sodium channels consists of inhibition on sodium current inactivation with no significant effect on current activation. This effect may be caused by direct interaction of the toxin with sodium channel site-3. The activity on potassium channels consists of a significant increase of the amplitude of the transient component of the potassium current, shifting the current threshold to more negative membrane potentials. These effects are concentration-dependent and reversible and may be due to a direct interaction between the toxin and the voltage-sensing domain of the channel. Physiologically, this toxin increases the amplitude of cardiomyocyte contraction and slows the late phase of the twitch relaxation velocity with no induction of spontaneous twitching. It increases action potential duration of cardiomyocytes with no effect on its threshold and on the cell resting potential. On insects, it shows neurotoxic activity to the blowfly larvae S.falculaty, causing an immediate spasm that progressed to body contraction and paralysis. In Exaiptasia diaphana (Tropical sea anemone), this protein is Delta-aiptatoxin-Adi1a.